A 349-amino-acid polypeptide reads, in one-letter code: tRNA pseudouridine synthase D (349 aa).

Phe-27 is a binding site for substrate. The active-site Nucleophile is Asp-80. Asn-129 lines the substrate pocket. A TRUD domain is found at 155-303 (GVPNYFGAQR…VEAARRAMLL (149 aa)). Phe-329 contacts substrate.

This sequence belongs to the pseudouridine synthase TruD family.

The enzyme catalyses uridine(13) in tRNA = pseudouridine(13) in tRNA. Its function is as follows. Responsible for synthesis of pseudouridine from uracil-13 in transfer RNAs. In Shigella boydii serotype 4 (strain Sb227), this protein is tRNA pseudouridine synthase D.